The following is a 297-amino-acid chain: Formylmethanofuran--tetrahydromethanopterin formyltransferase (297 aa).

It belongs to the FTR family. Homotetramer.

It is found in the cytoplasm. The enzyme catalyses N-formylmethanofuran + 5,6,7,8-tetrahydromethanopterin + H(+) = N(5)-formyl-5,6,7,8-tetrahydromethanopterin + methanofuran. It functions in the pathway one-carbon metabolism; methanogenesis from CO(2); 5,10-methenyl-5,6,7,8-tetrahydromethanopterin from CO(2): step 2/3. Its function is as follows. Catalyzes the reversible transfer of a formyl group from formylmethanofuran (formyl-MFR) to tetrahydromethanopterin (H(4)MPT) to produce 5-formyl tetrahydromethanopterin (5-formyl-H(4)MPT) and methanofuran (MFR). The sequence is that of Formylmethanofuran--tetrahydromethanopterin formyltransferase from Methanothermobacter thermautotrophicus (strain ATCC 29096 / DSM 1053 / JCM 10044 / NBRC 100330 / Delta H) (Methanobacterium thermoautotrophicum).